Consider the following 129-residue polypeptide: Large ribosomal subunit protein bL32m (129 aa).

The transit peptide at 1 to 63 (MAAMTAAAAA…LEDIWEGILR (63 aa)) directs the protein to the mitochondrion. Zn(2+) is bound by residues cysteine 94, cysteine 97, cysteine 107, and cysteine 110.

Belongs to the bacterial ribosomal protein bL32 family. Component of the mitochondrial large ribosomal subunit (mt-LSU). Mature N.crassa 74S mitochondrial ribosomes consist of a small (37S) and a large (54S) subunit. The 37S small subunit contains a 16S ribosomal RNA (16S mt-rRNA) and 32 different proteins. The 54S large subunit contains a 23S rRNA (23S mt-rRNA) and 42 different proteins. bL32m has a zinc binding site. In terms of processing, MRPL32 precursor is processed by the m-AAA protease (composed of YTA12/RCA1 and YTA10/AFG3), which cleaves the N-terminal transit peptide. Cleavage by the m-AAA protease takes place prior to assembly into the large subunit, an essential step for mitochondrial ribosome (mitoribosome) assembly. Proper processing by the m-AAA protease is dependent on the zinc-binding region within the tightly folded C-terminal domain of MRPL32: zinc-dependent folding halts degradation initiated from the N-terminus and triggers the release of mature MRPL32.

The protein localises to the mitochondrion. Its function is as follows. Component of the mitochondrial ribosome (mitoribosome), a dedicated translation machinery responsible for the synthesis of mitochondrial genome-encoded proteins, including at least some of the essential transmembrane subunits of the mitochondrial respiratory chain. The mitoribosomes are attached to the mitochondrial inner membrane and translation products are cotranslationally integrated into the membrane. In Neurospora crassa (strain ATCC 24698 / 74-OR23-1A / CBS 708.71 / DSM 1257 / FGSC 987), this protein is Large ribosomal subunit protein bL32m (mrpl32).